Here is an 88-residue protein sequence, read N- to C-terminus: Small ribosomal subunit protein bS20 (88 aa).

The interval 1–27 (MANTASAKKMTRKIAKRTAINRSRRSR) is disordered.

Belongs to the bacterial ribosomal protein bS20 family.

Its function is as follows. Binds directly to 16S ribosomal RNA. The sequence is that of Small ribosomal subunit protein bS20 from Methylobacterium radiotolerans (strain ATCC 27329 / DSM 1819 / JCM 2831 / NBRC 15690 / NCIMB 10815 / 0-1).